The chain runs to 1297 residues: MTFVDDDEEEDFSVPQSASNYYFEDDDKEPVSFARLPIQWSVEEKVDGSGLGFYLRGRSDNGLLPLHKLVKAWRYDLSNFQPEISVLTKDNIWIKLEEPRKSYGELIRTVLVTLHSIQFLRRNPQASEKALWEKLTRSLRSYDVKPSQNDLVDHIGLIAEAAKRDRNLANSKFILAFLTKKPTKRRLPDEDNAKDDFIVGDEDTYVASDEDELDDEDDDFFESVCAICDNGGEILCCEGSCLRSFHATKKDGEDSLCDSLGFNKMQVEAIQKYFCPNCEHKIHQCFICKNLGSSDNSSGAAEVFQCVSATCGYFYHPHCVTRRLRLGNKEESEALERQIIAGEYTCPLHKCSVCENGEVKTDSNLQFAVCRRCPKSYHRKCLPREISFEDIEDEDILTRAWDGLLHNRVLIYCQEHEIDEELLTPVRDHVKFPFTEEQKVFVKEQRRILESHVGRDKARLKVKDPALQDTCGKASKNSFRSSFPSSKDGFSTKKHGLVSSVPDHSRKRKDIDPSIKHKMVPQKSQKMMEDSREAGKNKLGVKEARDAGKSKISLGERLFSYTQEPNPVKPGRVIPVDSKHNKTDSIASKEPGSEIPTLDNDSQRRLLAVMKKATEEITMGTILKKFKIQSTMSTHSTRNVVDKTITMGKVEGSVQAIRTALKKLEEGGNIEDAKAVCEPEVLSQILKWKDKLKVYLAPFLHGARYTSFGRHFTNPEKLQQIVDRLHWYADDGDMIVDFCCGSNDFSCLMNAKLEETGKKCLYKNYDLFPAKNNFNFERKDWMTVSKDELEPGSKLIMGLNPPFGVNASLANKFITKALEFRPKILILIVPPETERLDKKKSSYVLIWEDKTFLSGNSFYLPGSVNEEDKQLEDWNLVPPPLSLWSRSDFAAKHKKIAEKHCHLSRDVGSSKLKIVEEEANASLHPLGASDGMCDDIPMEKDELEVAECVNKILVSEKIDTVETVARVHQSDHLSRRSQLKKEGKTKDYSGRKLGKSMDSNNVDWKSNDMEEDQGELSRAPESIKVKIPEMTSDWQSPVRSSPDDIYAVCTSISTTTPQRSHEAVEASLPAITRTKSNLGKNIREHGCKVQGTGKPEVSRDRPSSVRTSREDIYTVRPSPENTGQKPFEAFEPSYGASLSHFDDGLAAKYGGFGGGYRMPDPPFLPDQFPLRNGPNEMFDFRGYSDLDRGIGQREYPQQYGGHLDPMLAPPPPPNLMDNAFPLQQRYAPHFDQMNYQRMSSFPPQPPLQPSGHNLLNPHDFPLPPPPPSDFEMSPRGFAPGPNPNYPYMSRSGGWIND.

The PHD-type 1; degenerate zinc finger occupies 222 to 281 (ESVCAICDNGGEILCCEGSCLRSFHATKKDGEDSLCDSLGFNKMQVEAIQKYFCPNCEHK). Residues Cys-237, Cys-241, Cys-275, Cys-278, Cys-285, Cys-288, Cys-306, Cys-311, His-316, Cys-319, Cys-346, and His-349 each contribute to the Zn(2+) site. A PHD-type 2; atypical zinc finger spans residues 282-352 (IHQCFICKNL…EYTCPLHKCS (71 aa)). The segment at 351–417 (CSVCENGEVK…RVLIYCQEHE (67 aa)) adopts a PHD-type 3; degenerate zinc-finger fold. The short motif at 445–452 (QRRILESH) is the Nuclear localization signal 1 element. Disordered stretches follow at residues 471-547 (CGKA…ARDA) and 562-598 (TQEP…IPTL). The segment covering 475-487 (SKNSFRSSFPSSK) has biased composition (low complexity). Positions 492–499 (TKKHGLVS) match the Nuclear localization signal 2 motif. Positions 526–547 (KMMEDSREAGKNKLGVKEARDA) are enriched in basic and acidic residues. Short sequence motifs (nuclear localization signal) lie at residues 610-617 (MKKATEEI) and 979-986 (LKKEGKTK). Basic and acidic residues-rich tracts occupy residues 969–990 (QSDH…DYSG) and 1096–1109 (EVSR…RTSR). Disordered stretches follow at residues 969–1017 (QSDH…GELS), 1085–1109 (HGCK…RTSR), and 1260–1297 (FPLP…WIND).

Interacts with WNK8 in nucleus; this interaction is involved in developmental processes regulation but not in RPP7-dependent disease resistance. Interacts with EML1 and EML2 in nucleus. Component of the ASI1-AIPP1-EDM2 (AAE) RNA regulatory complex composed of at least AIPP1/EDM3, ASI1 and EDM2 and may contain CPL2, AIPP2 and AIPP3/BDT1. Binds directly to AIPP1/EDM3. Co-associates with AIPP1/EDM3 to histone H3 lysine 9 dimethylation (H3K9me2)-marked chromatin and transcripts at a critical proximal polyadenylation site of RPP7 to hamper proximal transcript polyadeylation/termination. In terms of processing, phosphorylated by WNK8.

It localises to the nucleus. Functionally, cellular antisilencing factor and regulator of genome DNA methylation patterns involved in the regulation of chromatin states. Together with SUVH4, monitors repressive epigenetic marks H3K27me1, H3K9me2, and prevents DNA-methylation at CHG sites, affecting especially the expression of transposons and developmentally important genes. Collaboratively with ASI1 and AIPP1/EDM3, the AAE complex regulates alternative RNA processing (e.g. alternative splicing) and epigenetic silencing (e.g. H3K9me2) of intronic heterochromatin-containing genes as well as genic heterochromatin-containing genes by promoting distal 3' polyadenylation. Epigenetic reader that binds DNA and contributes to transcriptional transposable element (TE) silencing by modulating levels of the repressive post-translational histone modifications (PHM) H3K9me2. In cv. Columbia, required for RPP7-dependent disease resistance against the Hyaloperonospora arabidopsidis isolate Hiks1, by promoting levels of RPP7 via alternative polyadenylation (APA), resulting from cooption of epigenetic information at the TE insertion locus COPIA-R7. Exhibits a global role in NLR (nucleotide-binding, leucine-rich repeat) defense genes epigenetic (e.g. H3K9me2 hallmarks) expression control; promotes the accumulation of RPP7, RPP4 and some other proteins, but mediates the repression of several other NLR products, probably to compensate for fitness penalties caused by defense mechanisms. Regulates development processes such as the formation of leaf pavement cells, leaf expansion, fertility and flowering. Prevents FLC accumulation to control flowering. Modulates stomatal development by regulating the methylation-mediated silencing of ERECTA receptor genes (e.g. ER, ERL1 and ERL2) and preventing cell divisions. This is Protein ENHANCED DOWNY MILDEW 2 from Arabidopsis thaliana (Mouse-ear cress).